Consider the following 471-residue polypeptide: Exoglucanase 2 (471 aa).

An N-terminal signal peptide occupies residues 1–18 (MIVGILTTLATLATLAAS). The propeptide occupies 19–24 (VPLEER). A Pyrrolidone carboxylic acid modification is found at Gln-25. One can recognise a CBM1 domain in the interval 26 to 62 (ACSSVWGQCGGQNWSGPTCCASGSTCVYSNDYYSQCL). Over residues 64-101 (GAASSSSSTRAASTTSRVSPTTSRSSSATPPPGSTTTR) the composition is skewed to low complexity. The segment at 64–108 (GAASSSSSTRAASTTSRVSPTTSRSSSATPPPGSTTTRVPPVGSG) is disordered. Residues 66–106 (ASSSSSTRAASTTSRVSPTTSRSSSATPPPGSTTTRVPPVG) form a linker region. Positions 107–471 (SGTATYSGNP…LLTNANPSFL (365 aa)) are catalytic. 2 O-linked (Man...) threonine glycosylation sites follow: Thr-111 and Thr-121. 4 O-linked (Man...) serine glycosylation sites follow: Ser-130, Ser-133, Ser-134, and Ser-139. Residue Thr-146 is glycosylated (O-linked (Man...) threonine). A disulfide bridge connects residues Cys-200 and Cys-259. Catalysis depends on Asp-245, which acts as the Proton donor. N-linked (GlcNAc) asparagine glycosylation occurs at Asn-313. The N-linked (GlcNAc...) (high mannose) asparagine glycan is linked to Asn-334. A disulfide bond links Cys-392 and Cys-439.

Belongs to the glycosyl hydrolase 6 (cellulase B) family. Asn-334 contains mainly a high-mannose-type glycan (Hex(7-9)GlcNAc(2)) in a 3:1 ration with a single GlcNAc. Asn-313 was primarily unglycosylated with a small fraction (18%) bearing a single GlcNAc at this site.

It localises to the secreted. The catalysed reaction is Hydrolysis of (1-&gt;4)-beta-D-glucosidic linkages in cellulose and cellotetraose, releasing cellobiose from the non-reducing ends of the chains.. Exocellobiohydrolases (CBH) that catalyzes the hydrolysis of 1,4-beta-D-glucosidic bonds in cellulose to release the disaccharide cellobiose. The degradation of cellulose involves an interplay between different cellulolytic enzymes. Hydrolysis starts with endoglucanases (EGs), which cut internal beta-1,4-glucosidic bonds in cellulose to reduce the polymerization degree of the substrate and create new chain ends for exocellobiohydrolases (CBHs). The CBHs release the disaccharide cellobiose from the non-reducing end of the cellulose polymer chain. Finally, beta-1,4-glucosidases hydrolyze the cellobiose and other short cello-oligosaccharides into glucose units. In Hypocrea jecorina (Trichoderma reesei), this protein is Exoglucanase 2 (cbh2).